We begin with the raw amino-acid sequence, 433 residues long: Nuclear hormone receptor family member nhr-98 (433 aa).

The segment at residues 41–116 (SKKCQICENP…FGMTIDNFQF (76 aa)) is a DNA-binding region (nuclear receptor). NR C4-type zinc fingers lie at residues 44–64 (CQIC…CRAC) and 80–104 (CKTE…MQRC). In terms of domain architecture, NR LBD spans 177–433 (ETPYQVSNVL…CSHPGIFLNA (257 aa)).

The protein belongs to the nuclear hormone receptor family.

It is found in the nucleus. In terms of biological role, orphan nuclear receptor. In Caenorhabditis elegans, this protein is Nuclear hormone receptor family member nhr-98 (nhr-98).